The sequence spans 434 residues: Histidinol dehydrogenase (434 aa).

2 residues coordinate Zn(2+): Glu-260 and His-263. Active-site proton acceptor residues include Glu-330 and His-331. Position 423 (His-423) interacts with Zn(2+).

The protein belongs to the histidinol dehydrogenase family. Requires Zn(2+) as cofactor.

It carries out the reaction L-histidinol + 2 NAD(+) + H2O = L-histidine + 2 NADH + 3 H(+). It functions in the pathway amino-acid biosynthesis; L-histidine biosynthesis; L-histidine from 5-phospho-alpha-D-ribose 1-diphosphate: step 9/9. Functionally, catalyzes the sequential NAD-dependent oxidations of L-histidinol to L-histidinaldehyde and then to L-histidine. The protein is Histidinol dehydrogenase (hisD) of Synechocystis sp. (strain ATCC 27184 / PCC 6803 / Kazusa).